The chain runs to 143 residues: Regulator of ribonuclease activity B (143 aa).

Residues 117-135 are compositionally biased toward acidic residues; that stretch reads DPDAEYDDEDGENEDDESE. Positions 117–143 are disordered; that stretch reads DPDAEYDDEDGENEDDESESDKSSRLH.

It belongs to the RraB family. Interacts with the C-terminal region of Rne.

It is found in the cytoplasm. Globally modulates RNA abundance by binding to RNase E (Rne) and regulating its endonucleolytic activity. Can modulate Rne action in a substrate-dependent manner by altering the composition of the degradosome. This is Regulator of ribonuclease activity B from Proteus mirabilis (strain HI4320).